We begin with the raw amino-acid sequence, 558 residues long: Ceramide kinase-like protein (558 aa).

The interval 1 to 36 (MPWRRRRNRVSALEGGREEEAPPEAAAVPPALLTSP) is disordered. Short sequence motifs (nuclear localization signal) lie at residues 2–9 (PWRRRRNR) and 102–106 (KLKRR). Residues 164-339 (NRPKSLKILL…VDVCTFSTAG (176 aa)) enclose the DAGKc domain.

In terms of processing, phosphorylated on serine residues. Isoform 1 and isoform 2 are expressed in adult retina, liver and pancreas as well as in fetal brain, lung and kidney. Isoform 3 is expressed in adult retina as well as in fetal lung and liver. Isoform 4 is expressed in adult retina, lung and kidney as well as in fetal lung and liver. Moderately expressed in retina, kidney, lung, testis, trachea, and pancreas. Weakly expressed in brain, placenta and liver.

It localises to the cytoplasm. The protein localises to the nucleus. The protein resides in the nucleolus. Its subcellular location is the golgi apparatus. It is found in the trans-Golgi network. It localises to the endoplasmic reticulum. Functionally, has no detectable ceramide-kinase activity. Overexpression of CERKL protects cells from apoptosis in oxidative stress conditions. This is Ceramide kinase-like protein (CERKL) from Homo sapiens (Human).